Consider the following 149-residue polypeptide: SsrA-binding protein (149 aa).

The protein belongs to the SmpB family.

It is found in the cytoplasm. Required for rescue of stalled ribosomes mediated by trans-translation. Binds to transfer-messenger RNA (tmRNA), required for stable association of tmRNA with ribosomes. tmRNA and SmpB together mimic tRNA shape, replacing the anticodon stem-loop with SmpB. tmRNA is encoded by the ssrA gene; the 2 termini fold to resemble tRNA(Ala) and it encodes a 'tag peptide', a short internal open reading frame. During trans-translation Ala-aminoacylated tmRNA acts like a tRNA, entering the A-site of stalled ribosomes, displacing the stalled mRNA. The ribosome then switches to translate the ORF on the tmRNA; the nascent peptide is terminated with the 'tag peptide' encoded by the tmRNA and targeted for degradation. The ribosome is freed to recommence translation, which seems to be the essential function of trans-translation. This Acholeplasma laidlawii (strain PG-8A) protein is SsrA-binding protein.